A 33-amino-acid chain; its full sequence is Natriuretic peptide NP2 (33 aa).

A disulfide bridge links cysteine 10 with cysteine 26.

As to expression, expressed by the venom gland.

The protein localises to the secreted. Its function is as follows. Snake venom natriuretic peptide that shows an increase in perfusion pressure, urinary flow and glomerular filtration rate. Reduces total and proximal tubular transport of sodium. In the aortic ring assay, causes a relaxant effect in endothelium-intact thoracic aortic rings precontracted with phenylephrine in the presence and absence of isatin, a natriuretic receptor antagonist. The chain is Natriuretic peptide NP2 from Crotalus durissus cascavella (Northeastern Brazilian rattlesnake).